A 156-amino-acid chain; its full sequence is Calcium-binding protein A (156 aa).

EF-hand domains are found at residues 4–39 (AITK…TGSK), 40–75 (DPLR…VAAK), 80–115 (AINN…NNPD), and 118–153 (APLM…YKSL). Ca(2+)-binding residues include Asp-17, Asn-19, Asp-21, Asn-23, Glu-28, Asp-53, Asp-55, Asp-57, Glu-64, Asp-93, Asp-95, Asp-97, Arg-99, Glu-104, Asp-131, Asp-133, Asp-135, and Glu-142.

The protein is Calcium-binding protein A (cbpA) of Dictyostelium discoideum (Social amoeba).